A 595-amino-acid chain; its full sequence is Tyrosine-protein phosphatase cdcA (595 aa).

A disordered region spans residues 32-57 (TPFPYPAEQPKSPSKRRAQASPSKKR). A compositionally biased stretch (basic residues) spans 44 to 57 (PSKRRAQASPSKKR). The Tyrosine-protein phosphatase domain maps to 233-381 (LPSTVSEVRS…QGSFREWWFE (149 aa)). Catalysis depends on C322, which acts as the Phosphocysteine intermediate. The segment at 392–595 (QPNPVTPGRS…GSPVRVKAQA (204 aa)) is disordered. The segment covering 449–461 (RKSHRKDSRHHPY) has biased composition (basic residues). Over residues 471 to 483 (VDKDTRKTRRSTD) the composition is skewed to basic and acidic residues. Over residues 502-526 (SKSPAASPGQRSISYSATVTASYTL) the composition is skewed to polar residues.

It belongs to the protein-tyrosine phosphatase family. Non-receptor class CDC14 subfamily.

The protein resides in the nucleus. Its subcellular location is the cytoplasm. It localises to the cell septum. The enzyme catalyses O-phospho-L-tyrosyl-[protein] + H2O = L-tyrosyl-[protein] + phosphate. Functionally, protein phosphatase which antagonizes mitotic cyclin-dependent kinase nimX, the inactivation of which is essential for exit from mitosis. To access its substrates, is released from nucleolar sequestration during mitosis. Plays an essential in coordinating the nuclear division cycle with cytokinesis through the cytokinesis checkpoint. Involved in chromosome segregation, where it is required for meiosis I spindle dissambly as well as for establishing two consecutive chromosome segregation phases. Required for the transcription of the two major endoglucanase genes eglA and eglB and growth on synthetic cellulose as the sole carbon source. The protein is Tyrosine-protein phosphatase cdcA (cdcA) of Emericella nidulans (strain FGSC A4 / ATCC 38163 / CBS 112.46 / NRRL 194 / M139) (Aspergillus nidulans).